The following is a 452-amino-acid chain: UPF0210 protein Dred_1672 (452 aa).

It belongs to the UPF0210 family. As to quaternary structure, homodimer.

This is UPF0210 protein Dred_1672 from Desulforamulus reducens (strain ATCC BAA-1160 / DSM 100696 / MI-1) (Desulfotomaculum reducens).